The sequence spans 467 residues: Rhamnulokinase (467 aa).

Ala-11–Arg-15 contacts ATP. Substrate-binding positions include Ala-78 and His-235 to Thr-237. Asp-236 serves as the catalytic Proton acceptor. Residue Thr-257 participates in ATP binding. Residue Asn-294 coordinates substrate. Gln-302 serves as a coordination point for ATP. A disulfide bond links Cys-351 and Cys-368. Gly-400 is a binding site for ATP.

The protein belongs to the rhamnulokinase family. The cofactor is Mg(2+).

It carries out the reaction L-rhamnulose + ATP = L-rhamnulose 1-phosphate + ADP + H(+). It participates in carbohydrate degradation; L-rhamnose degradation; glycerone phosphate from L-rhamnose: step 2/3. Its function is as follows. Involved in the catabolism of L-rhamnose (6-deoxy-L-mannose). Catalyzes the transfer of the gamma-phosphate group from ATP to the 1-hydroxyl group of L-rhamnulose to yield L-rhamnulose 1-phosphate. The chain is Rhamnulokinase from Halalkalibacterium halodurans (strain ATCC BAA-125 / DSM 18197 / FERM 7344 / JCM 9153 / C-125) (Bacillus halodurans).